Here is a 427-residue protein sequence, read N- to C-terminus: Glutamate-1-semialdehyde 2,1-aminomutase (427 aa).

Lysine 265 is subject to N6-(pyridoxal phosphate)lysine.

This sequence belongs to the class-III pyridoxal-phosphate-dependent aminotransferase family. HemL subfamily. As to quaternary structure, homodimer. Pyridoxal 5'-phosphate is required as a cofactor.

Its subcellular location is the cytoplasm. It catalyses the reaction (S)-4-amino-5-oxopentanoate = 5-aminolevulinate. It functions in the pathway porphyrin-containing compound metabolism; protoporphyrin-IX biosynthesis; 5-aminolevulinate from L-glutamyl-tRNA(Glu): step 2/2. This is Glutamate-1-semialdehyde 2,1-aminomutase from Pseudomonas fluorescens (strain Pf0-1).